Reading from the N-terminus, the 270-residue chain is Orotidine 5'-phosphate decarboxylase (270 aa).

Residues Asp-39, 61–63 (KTH), 93–102 (DRKFADIGNT), Tyr-221, and Arg-239 each bind substrate. The active-site Proton donor is Lys-95.

It belongs to the OMP decarboxylase family.

The catalysed reaction is orotidine 5'-phosphate + H(+) = UMP + CO2. The protein operates within pyrimidine metabolism; UMP biosynthesis via de novo pathway; UMP from orotate: step 2/2. This chain is Orotidine 5'-phosphate decarboxylase (URA3), found in Candida albicans (strain SC5314 / ATCC MYA-2876) (Yeast).